We begin with the raw amino-acid sequence, 584 residues long: Ubiquitin-like-specific protease 1D (584 aa).

2 disordered regions span residues 28–64 and 99–323; these read DKEDEVPELEIVNTTKPTPPPPPTFFSDDQTDSPKLL and DLEE…QAAE. Over residues 99 to 120 the composition is skewed to basic and acidic residues; the sequence is DLEEEKQRRVLEGSKMEVDRSS. Low complexity predominate over residues 121-132; sequence KVVSSTSSGSDV. 2 stretches are compositionally biased toward basic and acidic residues: residues 142–165 and 176–196; these read DTSRGNADSKDTSRQGNADSKEVS and PKTDSQSKKAFGKELEDLGCE. Positions 197–207 are enriched in basic residues; sequence RRKHKAGRKPV. Positions 221-253 are enriched in basic and acidic residues; the sequence is GKAEHSAKQFDSGLKESKGNKKSKEPYGKKRPM. Residues 261–274 show a composition bias toward acidic residues; that stretch reads IDDDDDDDDDDDND. Over residues 275 to 286 the composition is skewed to basic and acidic residues; sequence TSGHETPREWSW. Residues His-438, Asp-461, and Cys-525 contribute to the active site.

This sequence belongs to the peptidase C48 family.

Its subcellular location is the nucleus speckle. Its function is as follows. Protease that catalyzes two essential functions in the SUMO pathway: processing of full-length SUMOs to their mature forms and deconjugation of SUMO from targeted proteins. Cleaves precursors of SUM1 and SUM2, but not of SUM3 or SUM5. Able to release SUM1 and SUM2 from conjugates, but unable to cleave SUM3. Protease activity mainly directed at deconjugating SUM1 and SUM2 from their target proteins. Regulates salt stress responses and flowering time. Redundant with ULP1C. This chain is Ubiquitin-like-specific protease 1D (ULP1D), found in Arabidopsis thaliana (Mouse-ear cress).